A 272-amino-acid chain; its full sequence is Dihydropteroate synthase (272 aa).

The 256-residue stretch at 1–256 (MIKTKIMGIL…NVLLNTRLAQ (256 aa)) folds into the Pterin-binding domain. Asn-11 provides a ligand contact to Mg(2+). Residues Thr-51, Asp-89, Asn-108, Asp-172, Lys-208, and 244-246 (RVH) each bind (7,8-dihydropterin-6-yl)methyl diphosphate.

The protein belongs to the DHPS family. As to quaternary structure, homodimer. Requires Mg(2+) as cofactor.

It carries out the reaction (7,8-dihydropterin-6-yl)methyl diphosphate + 4-aminobenzoate = 7,8-dihydropteroate + diphosphate. Its pathway is cofactor biosynthesis; tetrahydrofolate biosynthesis; 7,8-dihydrofolate from 2-amino-4-hydroxy-6-hydroxymethyl-7,8-dihydropteridine diphosphate and 4-aminobenzoate: step 1/2. In terms of biological role, catalyzes the condensation of para-aminobenzoate (pABA) with 6-hydroxymethyl-7,8-dihydropterin diphosphate (DHPt-PP) to form 7,8-dihydropteroate (H2Pte), the immediate precursor of folate derivatives. This is Dihydropteroate synthase (folP) from Staphylococcus epidermidis (strain ATCC 12228 / FDA PCI 1200).